The sequence spans 131 residues: Acidic leucine-rich nuclear phosphoprotein 32 family member D (131 aa).

LRR repeat units lie at residues 18–38 (DVKE…EGLT), 43–64 (ELEL…PKLN), 65–87 (KLKK…AEKC), 89–110 (NLIH…EPLK), and 114–131 (NLES…LNNY).

This sequence belongs to the ANP32 family.

The sequence is that of Acidic leucine-rich nuclear phosphoprotein 32 family member D (ANP32D) from Homo sapiens (Human).